The sequence spans 548 residues: Probable malate:quinone oxidoreductase (548 aa).

Residues 521–548 form a disordered region; sequence DKPQAADSTPKPQLKPQPVQKEVADIAL. Residues 530-541 show a composition bias toward low complexity; sequence PKPQLKPQPVQK.

Belongs to the MQO family. The cofactor is FAD.

The catalysed reaction is (S)-malate + a quinone = a quinol + oxaloacetate. It functions in the pathway carbohydrate metabolism; tricarboxylic acid cycle; oxaloacetate from (S)-malate (quinone route): step 1/1. This Shigella sonnei (strain Ss046) protein is Probable malate:quinone oxidoreductase.